The sequence spans 204 residues: MPKVGLFNKEGQQVGDIQLNEQVFGVEVNKYALHQVVVAQLANKRQGTQSAKTRSEVRGGGIKPWRQKGTGRARQGSIRAPQWIKGGVVFAPKPRDYRMSIPKSMRKVAMTSALTSKVADMVVLEDLTFEAPKTKEAVKMLNAFEAKKTLIITAEVNENVYKSARNIEGVTVMPVNNINVYDLLNCKTLMITKEAVNKIEEVYA.

The interval 44–76 (KRQGTQSAKTRSEVRGGGIKPWRQKGTGRARQG) is disordered.

The protein belongs to the universal ribosomal protein uL4 family. In terms of assembly, part of the 50S ribosomal subunit.

One of the primary rRNA binding proteins, this protein initially binds near the 5'-end of the 23S rRNA. It is important during the early stages of 50S assembly. It makes multiple contacts with different domains of the 23S rRNA in the assembled 50S subunit and ribosome. In terms of biological role, forms part of the polypeptide exit tunnel. The chain is Large ribosomal subunit protein uL4 from Clostridium perfringens (strain ATCC 13124 / DSM 756 / JCM 1290 / NCIMB 6125 / NCTC 8237 / Type A).